Reading from the N-terminus, the 189-residue chain is Probable nicotinate-nucleotide adenylyltransferase (189 aa).

It belongs to the NadD family.

It carries out the reaction nicotinate beta-D-ribonucleotide + ATP + H(+) = deamido-NAD(+) + diphosphate. The protein operates within cofactor biosynthesis; NAD(+) biosynthesis; deamido-NAD(+) from nicotinate D-ribonucleotide: step 1/1. Catalyzes the reversible adenylation of nicotinate mononucleotide (NaMN) to nicotinic acid adenine dinucleotide (NaAD). The protein is Probable nicotinate-nucleotide adenylyltransferase of Staphylococcus aureus (strain USA300 / TCH1516).